A 1875-amino-acid polypeptide reads, in one-letter code: Soluble starch synthase 3a, chloroplastic/amyloplastic (1875 aa).

Residues 1-49 (MEMALRPQSLLCPRSRLKVVIRPASSASGGGLAQYFLMTRRYTGSRIVR) constitute a chloroplast transit peptide. Positions 1007–1065 (KRELERVATEEAERRRHAEEQQRMGEQRAAEQAAREQAKKEIELKKNKLQNLLSSARTH) form a coiled coil. The segment at 1014–1043 (ATEEAERRRHAEEQQRMGEQRAAEQAAREQ) is disordered.

This sequence belongs to the glycosyltransferase 1 family. Bacterial/plant glycogen synthase subfamily. In terms of tissue distribution, expressed in the endosperm.

The protein resides in the plastid. Its subcellular location is the chloroplast. The protein localises to the amyloplast. The enzyme catalyses [(1-&gt;4)-alpha-D-glucosyl](n) + ADP-alpha-D-glucose = [(1-&gt;4)-alpha-D-glucosyl](n+1) + ADP + H(+). Its pathway is glycan biosynthesis; starch biosynthesis. Functionally, involved in starch synthesis in endosperm amyloplasts. Plays an important role in the elongation of amylopectin B chains. The chain is Soluble starch synthase 3a, chloroplastic/amyloplastic from Oryza sativa subsp. japonica (Rice).